Reading from the N-terminus, the 191-residue chain is MAP6 domain-containing protein 1 (191 aa).

3 S-palmitoyl cysteine lipidation sites follow: Cys-5, Cys-10, and Cys-11. Positions 31 to 106 are disordered; it reads HGYSDPGSEE…RGQSSAPPTR (76 aa). Phosphoserine occurs at positions 38 and 41. Mn stretches follow at residues 123 to 136 and 158 to 170; these read TTSYRQEFQAWTGV and DPSPGASFQVPEV. Ser-160 carries the post-translational modification Phosphoserine.

The protein belongs to the STOP family. In terms of assembly, interacts with calmodulin. Post-translationally, palmitoylated. Palmitoylation enhances association with microtubules. In terms of tissue distribution, expressed in brain. Found in neurons in primary cultures, but absent in glial cells.

It localises to the golgi apparatus. The protein resides in the cytoplasm. The protein localises to the cytoskeleton. Functionally, may have microtubule-stabilizing activity. The sequence is that of MAP6 domain-containing protein 1 (Map6d1) from Mus musculus (Mouse).